Consider the following 236-residue polypeptide: Large ribosomal subunit protein uL3 (236 aa).

Residues 139-149 are compositionally biased toward low complexity; sequence SVSHRSHGSTG. Residues 139–165 are disordered; that stretch reads SVSHRSHGSTGQRQDPGKVFKGKKMAG. Gln-152 is subject to N5-methylglutamine.

This sequence belongs to the universal ribosomal protein uL3 family. Part of the 50S ribosomal subunit. Forms a cluster with proteins L14 and L19. Methylated by PrmB.

In terms of biological role, one of the primary rRNA binding proteins, it binds directly near the 3'-end of the 23S rRNA, where it nucleates assembly of the 50S subunit. This is Large ribosomal subunit protein uL3 from Pelagibacter ubique (strain HTCC1062).